The following is a 354-amino-acid chain: Guanine nucleotide-binding protein G(i) subunit alpha-1 (354 aa).

Gly-2 is lipidated: N-myristoyl glycine. Cys-3 carries S-palmitoyl cysteine lipidation. The G-alpha domain occupies 32 to 354 (REVKLLLLGA…KNNLKDCGLF (323 aa)). Residues 35 to 48 (KLLLLGAGESGKST) are G1 motif. GTP contacts are provided by residues 43–48 (ESGKST), 150–151 (DS), and 175–178 (LRTR). Residue Ser-47 participates in Mg(2+) binding. Positions 173–181 (DVLRTRVKT) are G2 motif. Mg(2+) is bound at residue Thr-181. The segment at 196–205 (FKMFDVGGQR) is G3 motif. GTP-binding positions include 200-204 (DVGGQ), 269-272 (NKKD), and Ala-326. Positions 265–272 (ILFLNKKD) are G4 motif. The interval 324-329 (TCATDT) is G5 motif.

Belongs to the G-alpha family. G(i/o/t/z) subfamily. Heterotrimeric G proteins are composed of 3 units; alpha, beta and gamma. The alpha chain contains the guanine nucleotide binding site. Part of a spindle orientation complex at least composed of GNAI1, GPSM2 and NUMA1. Identified in complex with the beta subunit GNB1 and the gamma subunit GNG1. Identified in complex with the beta subunit GNB1 and the gamma subunit GNG2. Component of the TAS2R14-GNAI1 complex, consisting of TAS2R14, GNAI1, GNB1 and GNG2; within the complex interacts with TAS2R14; this complex plays a role in the perception of bitterness. GTP binding causes dissociation of the heterotrimer, liberating the individual subunits so that they can interact with downstream effector proteins. Interacts (GDP-bound form) with GPSM1; this inhibits guanine nucleotide exchange and GTP binding. Interacts (GDP-bound form) with GPSM2 (via GoLoco domains); this inhibits guanine nucleotide exchange. Interacts with RGS10; this strongly enhances GTP hydrolysis. Interacts with RGS1 and RGS16; this strongly enhances GTPase activity. Interacts with RGS4. Interacts with RGS12. Interacts (via active GTP- or inactive GDP-bound forms) with RGS14 (via RGS and GoLoco domains). Interacts with RGS3, RGS6, RGS7, RGS8, RGS17, RGS18 and RGS20 (in vitro). Interacts (GDP-bound form) with RIC8A (via C-terminus); promoting GNAI1 folding and association with the plasma membrane. Interacts (inactive GDP-bound form) with NUCB1 (via GBA motif); the interaction leads to activation of GNAI1. Interacts (inactive GDP-bound form) with CCDC88C/DAPLE (via GBA motif); the interaction leads to activation of GNAI1. Interacts (inactive GDP-bound form) with CCDC8A/GIV (via GBA motif). Interacts with GPR15. Myristoylation at Gly-2 is required for membrane anchoring before palmitoylation. Post-translationally, palmitoylation at Cys-3 varies with membrane lipid composition.

It is found in the nucleus. It localises to the cytoplasm. The protein localises to the cell membrane. Its subcellular location is the cytoskeleton. The protein resides in the microtubule organizing center. It is found in the centrosome. It localises to the cell cortex. The protein localises to the membrane. In terms of biological role, guanine nucleotide-binding proteins (G proteins) function as transducers downstream of G protein-coupled receptors (GPCRs) in numerous signaling cascades. The alpha chain contains the guanine nucleotide binding site and alternates between an active, GTP-bound state and an inactive, GDP-bound state. Signaling by an activated GPCR promotes GDP release and GTP binding. The alpha subunit has a low GTPase activity that converts bound GTP to GDP, thereby terminating the signal. Both GDP release and GTP hydrolysis are modulated by numerous regulatory proteins. Signaling is mediated via effector proteins, such as adenylate cyclase. Inhibits adenylate cyclase activity of ADCY1, ADCY5 and ADCY6, leading to decreased intracellular cAMP levels. The inactive GDP-bound form prevents the association of RGS14 with centrosomes and is required for the translocation of RGS14 from the cytoplasm to the plasma membrane. Required for normal cytokinesis during mitosis. Required for cortical dynein-dynactin complex recruitment during metaphase. The polypeptide is Guanine nucleotide-binding protein G(i) subunit alpha-1 (GNAI1) (Pongo abelii (Sumatran orangutan)).